A 588-amino-acid chain; its full sequence is Arylsulfatase L (588 aa).

A signal peptide spans M1–S31. A glycan (N-linked (GlcNAc...) asparagine) is linked at N32. Ca(2+) contacts are provided by D46 and D47. An N-linked (GlcNAc...) asparagine glycan is attached at N58. Position 86 (C86) interacts with Ca(2+). C86 (nucleophile) is an active-site residue. The residue at position 86 (C86) is a 3-oxoalanine (Cys). N-linked (GlcNAc...) asparagine glycosylation is present at N125. Residue K145 participates in substrate binding. The active site involves H147. A glycan (N-linked (GlcNAc...) asparagine) is linked at N258. H301 is a binding site for substrate. N344 carries an N-linked (GlcNAc...) asparagine glycan. Residues D353 and H354 each contribute to the Ca(2+) site. Residue K378 coordinates substrate.

This sequence belongs to the sulfatase family. Ca(2+) serves as cofactor. The conversion to 3-oxoalanine (also known as C-formylglycine, FGly), of a serine or cysteine residue in prokaryotes and of a cysteine residue in eukaryotes, is critical for catalytic activity.

The protein resides in the golgi apparatus. It localises to the golgi stack. The enzyme catalyses an aryl sulfate + H2O = a phenol + sulfate + H(+). Exhibits arylsulfatase activity towards the artificial substrate 4-methylumbelliferyl sulfate. May be essential for the correct composition of cartilage and bone matrix during development. Has no activity toward steroid sulfates. This is Arylsulfatase L (ARSL) from Macaca fascicularis (Crab-eating macaque).